A 304-amino-acid polypeptide reads, in one-letter code: Putative S-adenosyl-L-methionine-dependent methyltransferase Mjls_1071 (304 aa).

Residues aspartate 130 and 159–160 (DL) each bind S-adenosyl-L-methionine.

It belongs to the UPF0677 family.

In terms of biological role, exhibits S-adenosyl-L-methionine-dependent methyltransferase activity. The polypeptide is Putative S-adenosyl-L-methionine-dependent methyltransferase Mjls_1071 (Mycobacterium sp. (strain JLS)).